The following is a 157-amino-acid chain: Transcription elongation factor GreA (157 aa).

Residues 17–37 (ELERLLKLRPQISEAIAEARE) adopt a coiled-coil conformation.

Belongs to the GreA/GreB family.

Necessary for efficient RNA polymerase transcription elongation past template-encoded arresting sites. The arresting sites in DNA have the property of trapping a certain fraction of elongating RNA polymerases that pass through, resulting in locked ternary complexes. Cleavage of the nascent transcript by cleavage factors such as GreA or GreB allows the resumption of elongation from the new 3'terminus. GreA releases sequences of 2 to 3 nucleotides. The protein is Transcription elongation factor GreA of Vibrio parahaemolyticus serotype O3:K6 (strain RIMD 2210633).